Consider the following 66-residue polypeptide: DNA-directed RNA polymerase subunit omega (66 aa).

The protein belongs to the RNA polymerase subunit omega family. As to quaternary structure, the RNAP catalytic core consists of 2 alpha, 1 beta, 1 beta' and 1 omega subunit. When a sigma factor is associated with the core the holoenzyme is formed, which can initiate transcription.

It catalyses the reaction RNA(n) + a ribonucleoside 5'-triphosphate = RNA(n+1) + diphosphate. In terms of biological role, promotes RNA polymerase assembly. Latches the N- and C-terminal regions of the beta' subunit thereby facilitating its interaction with the beta and alpha subunits. The polypeptide is DNA-directed RNA polymerase subunit omega (Bacillus licheniformis (strain ATCC 14580 / DSM 13 / JCM 2505 / CCUG 7422 / NBRC 12200 / NCIMB 9375 / NCTC 10341 / NRRL NRS-1264 / Gibson 46)).